The chain runs to 279 residues: Large ribosomal subunit protein uL2 (279 aa).

2 disordered regions span residues 29 to 49 (PVKQLTEGKSSSGGRNNNGRV) and 202 to 279 (NASI…KKKG). Residues 36–49 (GKSSSGGRNNNGRV) are compositionally biased toward low complexity. Residues 209–220 (GRSRWLGRRPHN) are compositionally biased toward basic residues.

Belongs to the universal ribosomal protein uL2 family. Part of the 50S ribosomal subunit. Forms a bridge to the 30S subunit in the 70S ribosome.

Functionally, one of the primary rRNA binding proteins. Required for association of the 30S and 50S subunits to form the 70S ribosome, for tRNA binding and peptide bond formation. It has been suggested to have peptidyltransferase activity; this is somewhat controversial. Makes several contacts with the 16S rRNA in the 70S ribosome. The sequence is that of Large ribosomal subunit protein uL2 from Beijerinckia indica subsp. indica (strain ATCC 9039 / DSM 1715 / NCIMB 8712).